Here is a 150-residue protein sequence, read N- to C-terminus: D-aminoacyl-tRNA deacylase (150 aa).

A Gly-cisPro motif, important for rejection of L-amino acids motif is present at residues 138–139 (GP).

Belongs to the DTD family. As to quaternary structure, homodimer.

It localises to the cytoplasm. The enzyme catalyses glycyl-tRNA(Ala) + H2O = tRNA(Ala) + glycine + H(+). It carries out the reaction a D-aminoacyl-tRNA + H2O = a tRNA + a D-alpha-amino acid + H(+). Functionally, an aminoacyl-tRNA editing enzyme that deacylates mischarged D-aminoacyl-tRNAs. Also deacylates mischarged glycyl-tRNA(Ala), protecting cells against glycine mischarging by AlaRS. Acts via tRNA-based rather than protein-based catalysis; rejects L-amino acids rather than detecting D-amino acids in the active site. By recycling D-aminoacyl-tRNA to D-amino acids and free tRNA molecules, this enzyme counteracts the toxicity associated with the formation of D-aminoacyl-tRNA entities in vivo and helps enforce protein L-homochirality. This Salinibacter ruber (strain DSM 13855 / M31) protein is D-aminoacyl-tRNA deacylase.